The following is a 686-amino-acid chain: Leucine-rich repeat-containing protein 49 (686 aa).

7 LRR repeats span residues 113–134, 135–156, 157–178, 179–200, 201–222, 223–244, and 245–266; these read HLRL…SNLQ, RLIF…STLK, SLRV…ENLK, NLDV…NHLC, DLRV…NGLD, SLTE…DNLP, and CLQR…SCLA. The region spanning 279–317 is the LRRCT domain; the sequence is NPIAQESWYKHTVLQNMMQLRQLDMKRITEEERRVASVV. Disordered regions lie at residues 311 to 332 and 359 to 381; these read RRVA…HKQS and ASTQ…DGGN. The stretch at 319–341 forms a coiled coil; sequence KKEEEKKRESHKQSLLKEKKRLT.

In terms of assembly, part of the neuronal tubulin polyglutamylase complex which contains TPGS1, TPGS2, TTLL1, LRRC49 and NICN1. Interacts with PCM1; TTLL1, TPGS1, TPGS2 and LRRC49.

The protein resides in the cytoplasm. It is found in the cytoskeleton. The protein localises to the microtubule organizing center. It localises to the centrosome. Its subcellular location is the centriolar satellite. In terms of biological role, subunit of the tubulin polyglutamylase complex (TPGC). The complex mediates cilia and flagella polyglutamylation which is essential for their biogenesis and motility. The polypeptide is Leucine-rich repeat-containing protein 49 (Lrrc49) (Mus musculus (Mouse)).